The chain runs to 345 residues: Probable dual-specificity RNA methyltransferase RlmN (345 aa).

Glutamate 93 functions as the Proton acceptor in the catalytic mechanism. In terms of domain architecture, Radical SAM core spans 99–326 (DDERATLCIS…TTIRASRGED (228 aa)). Cysteines 106 and 331 form a disulfide. 3 residues coordinate [4Fe-4S] cluster: cysteine 113, cysteine 117, and cysteine 120. S-adenosyl-L-methionine is bound by residues 158-159 (GE), serine 190, 212-214 (SLH), and histidine 288. Catalysis depends on cysteine 331, which acts as the S-methylcysteine intermediate.

This sequence belongs to the radical SAM superfamily. RlmN family. It depends on [4Fe-4S] cluster as a cofactor.

The protein resides in the cytoplasm. It carries out the reaction adenosine(2503) in 23S rRNA + 2 reduced [2Fe-2S]-[ferredoxin] + 2 S-adenosyl-L-methionine = 2-methyladenosine(2503) in 23S rRNA + 5'-deoxyadenosine + L-methionine + 2 oxidized [2Fe-2S]-[ferredoxin] + S-adenosyl-L-homocysteine. It catalyses the reaction adenosine(37) in tRNA + 2 reduced [2Fe-2S]-[ferredoxin] + 2 S-adenosyl-L-methionine = 2-methyladenosine(37) in tRNA + 5'-deoxyadenosine + L-methionine + 2 oxidized [2Fe-2S]-[ferredoxin] + S-adenosyl-L-homocysteine. Its function is as follows. Specifically methylates position 2 of adenine 2503 in 23S rRNA and position 2 of adenine 37 in tRNAs. The chain is Probable dual-specificity RNA methyltransferase RlmN from Bacteroides thetaiotaomicron (strain ATCC 29148 / DSM 2079 / JCM 5827 / CCUG 10774 / NCTC 10582 / VPI-5482 / E50).